Here is a 238-residue protein sequence, read N- to C-terminus: Large ribosomal subunit protein uL5c (238 aa).

It belongs to the universal ribosomal protein uL5 family. In terms of assembly, part of the 50S ribosomal subunit; contacts the 5S rRNA.

Its subcellular location is the plastid. The protein localises to the chloroplast. Functionally, binds 5S rRNA, forms part of the central protuberance of the 50S subunit. In Thalassiosira pseudonana (Marine diatom), this protein is Large ribosomal subunit protein uL5c (rpl5).